We begin with the raw amino-acid sequence, 601 residues long: Glutathione-regulated potassium-efflux system protein KefB (601 aa).

13 helical membrane-spanning segments follow: residues 4 to 24 (ADLL…VPLA), 29 to 49 (IGAV…GLGF), 55 to 75 (EILH…GLEL), 87 to 107 (IFGV…GLLM), 111 to 131 (FLWQ…TAMA), 152 to 172 (VLLF…LLAG), 177 to 197 (HFDW…LIGG), 207 to 227 (FIAA…LVLS), 230 to 250 (LFMD…GVLL), 262 to 282 (AIDP…GMSL), 284 to 304 (LGVL…LVVI), 324 to 344 (MQFA…FSTA), and 356 to 376 (ALLL…MKGI). The 120-residue stretch at 400 to 519 (KPQVIVVGFG…AGVTQFSRET (120 aa)) folds into the RCK N-terminal domain.

This sequence belongs to the monovalent cation:proton antiporter 2 (CPA2) transporter (TC 2.A.37) family. KefB subfamily. As to quaternary structure, interacts with the regulatory subunit KefG.

The protein resides in the cell inner membrane. In terms of biological role, pore-forming subunit of a potassium efflux system that confers protection against electrophiles. Catalyzes K(+)/H(+) antiport. The polypeptide is Glutathione-regulated potassium-efflux system protein KefB (Salmonella enteritidis PT4 (strain P125109)).